The following is a 110-amino-acid chain: uncharacterized protein (110 aa).

The protein belongs to the RuBisCO large chain family.

It localises to the mitochondrion. This is an uncharacterized protein from Arabidopsis thaliana (Mouse-ear cress).